We begin with the raw amino-acid sequence, 30 residues long: uncharacterized protein (30 aa).

Residues 1–30 form a disordered region; it reads MHLSTLPNVPWPNRSFTTKRPPLPNMSFSW.

This is an uncharacterized protein from Saccharomyces cerevisiae (strain ATCC 204508 / S288c) (Baker's yeast).